A 99-amino-acid chain; its full sequence is Aspartyl/glutamyl-tRNA(Asn/Gln) amidotransferase subunit C (99 aa).

The protein belongs to the GatC family. In terms of assembly, heterotrimer of A, B and C subunits.

It carries out the reaction L-glutamyl-tRNA(Gln) + L-glutamine + ATP + H2O = L-glutaminyl-tRNA(Gln) + L-glutamate + ADP + phosphate + H(+). The catalysed reaction is L-aspartyl-tRNA(Asn) + L-glutamine + ATP + H2O = L-asparaginyl-tRNA(Asn) + L-glutamate + ADP + phosphate + 2 H(+). In terms of biological role, allows the formation of correctly charged Asn-tRNA(Asn) or Gln-tRNA(Gln) through the transamidation of misacylated Asp-tRNA(Asn) or Glu-tRNA(Gln) in organisms which lack either or both of asparaginyl-tRNA or glutaminyl-tRNA synthetases. The reaction takes place in the presence of glutamine and ATP through an activated phospho-Asp-tRNA(Asn) or phospho-Glu-tRNA(Gln). The polypeptide is Aspartyl/glutamyl-tRNA(Asn/Gln) amidotransferase subunit C (Albidiferax ferrireducens (strain ATCC BAA-621 / DSM 15236 / T118) (Rhodoferax ferrireducens)).